A 68-amino-acid polypeptide reads, in one-letter code: Metallothionein-3 (68 aa).

Met1 carries the N-acetylmethionine modification. Residues 1 to 30 (MDPETCPCPTGGSCTCSDPCKCEGCTCASS) form a beta region. Positions 6, 8, 14, 16, 20, 22, 25, and 27 each coordinate a divalent metal cation. The interval 31-68 (KKSCCSCCPAECEKCAKDCVCKGGEGAEAEEKKCSCCQ) is alpha. Phosphoserine is present on Ser33. The a divalent metal cation site is built by Cys34, Cys35, Cys37, Cys38, Cys42, Cys45, Cys49, Cys51, Cys64, Cys66, and Cys67.

Belongs to the metallothionein superfamily. Type 1 family.

In terms of biological role, binds heavy metals. Contains five zinc and one copper atoms per polypeptide chain and only a negligible amount of cadmium. The chain is Metallothionein-3 (MT3) from Bos mutus grunniens (Wild yak).